Reading from the N-terminus, the 169-residue chain is Protein FAM106A (169 aa).

Belongs to the FAM106 family.

The polypeptide is Protein FAM106A (FAM106A) (Homo sapiens (Human)).